The following is a 214-amino-acid chain: Fruiting body protein SC14 (214 aa).

The signal sequence occupies residues 1–18; the sequence is MKLNIAILLAALAATASA. Residues Asn61 and Asn144 are each glycosylated (N-linked (GlcNAc...) asparagine). An SCP domain is found at 72 to 195; the sequence is LTAHNDERAQ…KSLWYYVCNY (124 aa).

The protein belongs to the CRISP family.

The protein resides in the secreted. The polypeptide is Fruiting body protein SC14 (SC14) (Schizophyllum commune (Split gill fungus)).